The primary structure comprises 468 residues: ERO1-like protein alpha (468 aa).

Positions Met-1–Gly-23 are cleaved as a signal peptide. 8 disulfides stabilise this stretch: Cys-35/Cys-48, Cys-37/Cys-46, Cys-85/Cys-391, Cys-94/Cys-99, Cys-94/Cys-131, Cys-99/Cys-104, Cys-208/Cys-241, and Cys-394/Cys-397. Phosphoserine is present on residues Ser-106, Ser-143, and Ser-145. FAD is bound by residues Arg-187, Thr-189, and Trp-200. The FAD site is built by Ser-252 and His-255. An N-linked (GlcNAc...) asparagine glycan is attached at Asn-280. Residues Arg-287 and Arg-300 each coordinate FAD. Asn-384 is a glycosylation site (N-linked (GlcNAc...) asparagine).

The protein belongs to the EROs family. Predominantly monomer. May function both as a monomer and a homodimer. Interacts with PDILT. Interacts with ERP44; the interaction results in retention of ERO1A in the endoplasmic reticulum. Requires FAD as cofactor. In terms of processing, the Cys-94/Cys-99 and Cys-394/Cys-397 disulfide bonds constitute the redox-active center. The Cys-94/Cys-99 disulfide bond may accept electron from P4HB and funnel them to the active site disulfide Cys-394/Cys-397. The regulatory Cys-99/Cys-104 disulfide bond stabilizes the other regulatory bond Cys-94/Cys-131. Phosphorylated on Ser-145 by FAM20C in the Golgi which increases its enzymatic activity. Phosphorylation is induced by lactation. It is also induced by hypoxia and reductive stress.

Its subcellular location is the endoplasmic reticulum membrane. The protein resides in the golgi apparatus lumen. It localises to the secreted. The protein localises to the cell projection. It is found in the dendrite. With respect to regulation, enzyme activity is tightly regulated to prevent the accumulation of reactive oxygen species in the endoplasmic reticulum. Reversibly down-regulated by the formation of disulfide bonds between the active site Cys-94 and Cys-131, and between Cys-99 and Cys-104. Glutathione may be required to regulate its activity in the endoplasmic reticulum. In terms of biological role, oxidoreductase involved in disulfide bond formation in the endoplasmic reticulum. Efficiently reoxidizes P4HB/PDI, the enzyme catalyzing protein disulfide formation, in order to allow P4HB to sustain additional rounds of disulfide formation. Following P4HB reoxidation, passes its electrons to molecular oxygen via FAD, leading to the production of reactive oxygen species (ROS) in the cell. Required for the proper folding of immunoglobulins. Plays an important role in ER stress-induced, CHOP-dependent apoptosis by activating the inositol 1,4,5-trisphosphate receptor IP3R1. The protein is ERO1-like protein alpha of Sus scrofa (Pig).